We begin with the raw amino-acid sequence, 556 residues long: 2-succinyl-5-enolpyruvyl-6-hydroxy-3-cyclohexene-1-carboxylate synthase (556 aa).

It belongs to the TPP enzyme family. MenD subfamily. In terms of assembly, homodimer. Mg(2+) serves as cofactor. Requires Mn(2+) as cofactor. It depends on thiamine diphosphate as a cofactor.

The catalysed reaction is isochorismate + 2-oxoglutarate + H(+) = 5-enolpyruvoyl-6-hydroxy-2-succinyl-cyclohex-3-ene-1-carboxylate + CO2. It participates in quinol/quinone metabolism; 1,4-dihydroxy-2-naphthoate biosynthesis; 1,4-dihydroxy-2-naphthoate from chorismate: step 2/7. Its pathway is quinol/quinone metabolism; menaquinone biosynthesis. In terms of biological role, catalyzes the thiamine diphosphate-dependent decarboxylation of 2-oxoglutarate and the subsequent addition of the resulting succinic semialdehyde-thiamine pyrophosphate anion to isochorismate to yield 2-succinyl-5-enolpyruvyl-6-hydroxy-3-cyclohexene-1-carboxylate (SEPHCHC). The chain is 2-succinyl-5-enolpyruvyl-6-hydroxy-3-cyclohexene-1-carboxylate synthase from Klebsiella pneumoniae (strain 342).